A 268-amino-acid chain; its full sequence is Shikimate dehydrogenase (NADP(+)) (268 aa).

Shikimate-binding positions include 13 to 15 and Thr-60; that span reads SLS. The Proton acceptor role is filled by Lys-64. Position 76 (Glu-76) interacts with NADP(+). 2 residues coordinate shikimate: Asn-85 and Asp-100. NADP(+) contacts are provided by residues 124–128, 148–153, and Ile-209; these read GAGGA and NRTMAR. Residue Tyr-211 participates in shikimate binding. Gly-232 serves as a coordination point for NADP(+).

Belongs to the shikimate dehydrogenase family. Homodimer.

The enzyme catalyses shikimate + NADP(+) = 3-dehydroshikimate + NADPH + H(+). It functions in the pathway metabolic intermediate biosynthesis; chorismate biosynthesis; chorismate from D-erythrose 4-phosphate and phosphoenolpyruvate: step 4/7. Involved in the biosynthesis of the chorismate, which leads to the biosynthesis of aromatic amino acids. Catalyzes the reversible NADPH linked reduction of 3-dehydroshikimate (DHSA) to yield shikimate (SA). The chain is Shikimate dehydrogenase (NADP(+)) from Staphylococcus aureus (strain USA300).